Here is a 203-residue protein sequence, read N- to C-terminus: 5-formyltetrahydrofolate cyclo-ligase (203 aa).

An N-acetylalanine modification is found at A2. ATP-binding positions include 10-14 (KRSLR) and R14. Substrate contacts are provided by residues L56, E61, and 148–152 (RGKGY). ATP is bound at residue 145-153 (RLGRGKGYY). Mg(2+) contacts are provided by D154 and D189.

Belongs to the 5-formyltetrahydrofolate cyclo-ligase family. As to quaternary structure, monomer. Mg(2+) is required as a cofactor.

It is found in the cytoplasm. It catalyses the reaction (6S)-5-formyl-5,6,7,8-tetrahydrofolate + ATP = (6R)-5,10-methenyltetrahydrofolate + ADP + phosphate. Contributes to tetrahydrofolate metabolism. Helps regulate carbon flow through the folate-dependent one-carbon metabolic network that supplies carbon for the biosynthesis of purines, thymidine and amino acids. Catalyzes the irreversible conversion of 5-formyltetrahydrofolate (5-FTHF) to yield 5,10-methenyltetrahydrofolate. This is 5-formyltetrahydrofolate cyclo-ligase (MTHFS) from Homo sapiens (Human).